A 465-amino-acid chain; its full sequence is Sushi repeat-containing protein SRPX2 (465 aa).

A signal peptide spans 1–23 (MAIQLTRRGALSLLLFLTPAVMP). Sushi domains lie at 69 to 119 (ATCY…YCRQ), 120 to 178 (MRCH…VCVD), and 262 to 321 (RRCP…VCVP). 4 cysteine pairs are disulfide-bonded: C71/C105, C91/C117, C122/C163, and C149/C176. The HYR domain maps to 177 to 261 (VDIDPPKIRC…SCKFIVKVQV (85 aa)). 2 cysteine pairs are disulfide-bonded: C264–C306 and C292–C319.

In terms of assembly, forms homooligomers. Interacts with PLAUR (via the UPAR/Ly6 domains), ADAMTS4 and CTSB. Interacts with HGF; the interaction increases the mitogenic activity of HGF. In terms of processing, contains chondroitin sulfate chains.

It is found in the secreted. The protein localises to the cytoplasm. Its subcellular location is the cell surface. The protein resides in the synapse. Acts as a ligand for the urokinase plasminogen activator surface receptor. Plays a role in angiogenesis by inducing endothelial cell migration and the formation of vascular network (cords). Involved in cellular migration and adhesion. Increases the phosphorylation levels of FAK. Interacts with and increases the mitogenic activity of HGF. Promotes synapse formation. The sequence is that of Sushi repeat-containing protein SRPX2 (SRPX2) from Bos taurus (Bovine).